We begin with the raw amino-acid sequence, 420 residues long: Phosphoglycerate kinase (420 aa).

Residues valine 26, aspartate 27, tyrosine 28, asparagine 29, glutamine 42, arginine 43, serine 66, histidine 67, glycine 69, arginine 70, leucine 125, arginine 126, histidine 173, and arginine 174 each contribute to the (2R)-3-phosphoglycerate site. Position 199 is a phosphotyrosine (tyrosine 199). Serine 206 is modified (phosphoserine). The segment at lysine 209 to glutamate 228 is calmodulin binding. Position 217 (glycine 217) interacts with ADP. Glycine 217 contacts CDP. Residues alanine 218 and lysine 219 each contribute to the AMP site. Alanine 218 contributes to the ATP binding site. Alanine 218 contributes to the Mg(2+) binding site. Aspartate 222 is a binding site for CDP. Aspartate 222 serves as a coordination point for Mg(2+). Lysine 223 is a binding site for AMP. Lysine 223 lines the ATP pocket. Residue glycine 241 participates in ADP binding. Glycine 241 contributes to the CDP binding site. Residues glycine 242 and glycine 316 each contribute to the AMP site. Residues glycine 242 and glycine 316 each coordinate ATP. Residues glycine 341 and phenylalanine 346 each contribute to the CDP site. Phenylalanine 346 lines the ADP pocket. Glutamate 347 contributes to the AMP binding site. The ATP site is built by glutamate 347, aspartate 378, and threonine 379. Residue aspartate 378 participates in Mg(2+) binding. Phosphoserine is present on serine 393.

It belongs to the phosphoglycerate kinase family. Monomer. Interacts with calmodulin in the presence of Ca(2+). The cofactor is Mg(2+).

The protein localises to the cytoplasm. The enzyme catalyses (2R)-3-phosphoglycerate + ATP = (2R)-3-phospho-glyceroyl phosphate + ADP. The protein operates within carbohydrate degradation; glycolysis; pyruvate from D-glyceraldehyde 3-phosphate: step 2/5. In Dictyostelium discoideum (Social amoeba), this protein is Phosphoglycerate kinase.